Here is a 246-residue protein sequence, read N- to C-terminus: 1-(5-phosphoribosyl)-5-[(5-phosphoribosylamino)methylideneamino] imidazole-4-carboxamide isomerase (246 aa).

The active-site Proton acceptor is the aspartate 8. The active-site Proton donor is the aspartate 129.

The protein belongs to the HisA/HisF family.

The protein localises to the cytoplasm. The enzyme catalyses 1-(5-phospho-beta-D-ribosyl)-5-[(5-phospho-beta-D-ribosylamino)methylideneamino]imidazole-4-carboxamide = 5-[(5-phospho-1-deoxy-D-ribulos-1-ylimino)methylamino]-1-(5-phospho-beta-D-ribosyl)imidazole-4-carboxamide. It participates in amino-acid biosynthesis; L-histidine biosynthesis; L-histidine from 5-phospho-alpha-D-ribose 1-diphosphate: step 4/9. This is 1-(5-phosphoribosyl)-5-[(5-phosphoribosylamino)methylideneamino] imidazole-4-carboxamide isomerase from Nitrobacter hamburgensis (strain DSM 10229 / NCIMB 13809 / X14).